A 266-amino-acid chain; its full sequence is Type III pantothenate kinase (266 aa).

6-13 (DIGNSRIK) serves as a coordination point for ATP. Residues tyrosine 94 and 101–104 (GIDR) each bind substrate. Aspartate 103 (proton acceptor) is an active-site residue. Aspartate 128 provides a ligand contact to K(+). Threonine 131 contributes to the ATP binding site. Threonine 183 is a substrate binding site.

This sequence belongs to the type III pantothenate kinase family. In terms of assembly, homodimer. Requires NH4(+) as cofactor. The cofactor is K(+).

It is found in the cytoplasm. It carries out the reaction (R)-pantothenate + ATP = (R)-4'-phosphopantothenate + ADP + H(+). Its pathway is cofactor biosynthesis; coenzyme A biosynthesis; CoA from (R)-pantothenate: step 1/5. Catalyzes the phosphorylation of pantothenate (Pan), the first step in CoA biosynthesis. The sequence is that of Type III pantothenate kinase from Nitrosococcus oceani (strain ATCC 19707 / BCRC 17464 / JCM 30415 / NCIMB 11848 / C-107).